Reading from the N-terminus, the 245-residue chain is Tegument protein UL51 homolog (245 aa).

Cysteine 10 carries the S-palmitoyl cysteine; by host lipid modification. A disordered region spans residues proline 225–valine 245. Basic residues predominate over residues leucine 230–valine 245.

Belongs to the herpesviridae UL51 family. In terms of assembly, oligomerizes. Interacts with ORF55; this interaction mediates ORF55 incorporation to virions. Post-translationally, phosphorylated. Palmitoylation is necessary for Golgi localization.

It localises to the virion tegument. It is found in the host cytoplasm. The protein resides in the host Golgi apparatus. Functionally, plays several roles during the time course of infection, including egress of virus particles from the perinuclear space and secondary envelopment of cytoplasmic capsids that bud into specific trans-Golgi network (TGN)-derived membranes. This is Tegument protein UL51 homolog from Equine herpesvirus 1 (strain Ab4p) (EHV-1).